The chain runs to 343 residues: MKTLTITRPDDWHIHLRDGAQLTDTVRDISRYMGRAIVMPNLVPPAIDTETALAYYDRIKARVPAGSQFEPLMVLYLTDKTSPDEIRKAKASGKVFAAKLYPAGATTNSDSGVTDLKNIYPALEAMQEVGMLFLVHGEVTDSSIDIFDRERVFIENILSKIVTDFPNLKIVLEHITTKDAVDFVTQASDNVAATITAHHLLYNRNHMLAGGIRPHFYCLPILKRNTHQQALLAAAASGNKKFFLGTDSAPHAKDRKEAACGCAGSYTAHAAIELYAEAFESVNALDKLEAFASFNGPDFYNLPRNSDTITLVKKAWDIPASYPLGDTNVVPIRAGEQIDWQVE.

Histidine 13 and histidine 15 together coordinate Zn(2+). Substrate contacts are provided by residues 15 to 17 (HLR) and asparagine 41. 3 residues coordinate Zn(2+): lysine 99, histidine 136, and histidine 174. Lysine 99 carries the post-translational modification N6-carboxylysine. Histidine 136 is a substrate binding site. Leucine 219 lines the substrate pocket. Aspartate 247 is a binding site for Zn(2+). Aspartate 247 is an active-site residue. Positions 251 and 263 each coordinate substrate.

Belongs to the metallo-dependent hydrolases superfamily. DHOase family. Class II DHOase subfamily. Homodimer. The cofactor is Zn(2+).

The enzyme catalyses (S)-dihydroorotate + H2O = N-carbamoyl-L-aspartate + H(+). Its pathway is pyrimidine metabolism; UMP biosynthesis via de novo pathway; (S)-dihydroorotate from bicarbonate: step 3/3. Catalyzes the reversible cyclization of carbamoyl aspartate to dihydroorotate. This Shewanella oneidensis (strain ATCC 700550 / JCM 31522 / CIP 106686 / LMG 19005 / NCIMB 14063 / MR-1) protein is Dihydroorotase.